A 280-amino-acid chain; its full sequence is Killer cell lectin-like receptor 7 (280 aa).

Topologically, residues 1–44 are cytoplasmic; the sequence is MSEQEVTYSTVRFHESSRLQKLVRTEEPQRPREACYREYSVPWK. A helical; Signal-anchor for type II membrane protein membrane pass occupies residues 45 to 66; sequence LIVIACGILCFLLLVTVALLAI. The Extracellular segment spans residues 67-280; it reads TIFQHSQQKH…CGKRLDKFPH (214 aa). An N-linked (GlcNAc...) asparagine glycan is attached at Asn-104. Residues 156–275 form the C-type lectin domain; the sequence is GFEKYWFCYG…SYICICGKRL (120 aa). Cystine bridges form between Cys-163–Cys-168, Cys-181–Cys-269, Cys-185–Cys-271, and Cys-250–Cys-263. The N-linked (GlcNAc...) asparagine glycan is linked to Asn-239.

Homodimer; disulfide-linked.

It localises to the membrane. In terms of biological role, receptor on natural killer (NK) cells for class I MHC. This Mus musculus (Mouse) protein is Killer cell lectin-like receptor 7 (Klra7).